The chain runs to 360 residues: Peptide chain release factor 1 (360 aa).

The residue at position 235 (glutamine 235) is an N5-methylglutamine.

It belongs to the prokaryotic/mitochondrial release factor family. Post-translationally, methylated by PrmC. Methylation increases the termination efficiency of RF1.

The protein localises to the cytoplasm. Its function is as follows. Peptide chain release factor 1 directs the termination of translation in response to the peptide chain termination codons UAG and UAA. In Paraburkholderia phymatum (strain DSM 17167 / CIP 108236 / LMG 21445 / STM815) (Burkholderia phymatum), this protein is Peptide chain release factor 1.